Reading from the N-terminus, the 785-residue chain is Endonuclease MutS2 (785 aa).

334-341 (GPNTGGKT) is a binding site for ATP. Positions 710-785 (LDLRGKRYEE…GNGATIVHFK (76 aa)) constitute a Smr domain.

Belongs to the DNA mismatch repair MutS family. MutS2 subfamily. As to quaternary structure, homodimer. Binds to stalled ribosomes, contacting rRNA.

Its function is as follows. Endonuclease that is involved in the suppression of homologous recombination and thus may have a key role in the control of bacterial genetic diversity. Functionally, acts as a ribosome collision sensor, splitting the ribosome into its 2 subunits. Detects stalled/collided 70S ribosomes which it binds and splits by an ATP-hydrolysis driven conformational change. Acts upstream of the ribosome quality control system (RQC), a ribosome-associated complex that mediates the extraction of incompletely synthesized nascent chains from stalled ribosomes and their subsequent degradation. Probably generates substrates for RQC. The polypeptide is Endonuclease MutS2 (Pediococcus pentosaceus (strain ATCC 25745 / CCUG 21536 / LMG 10740 / 183-1w)).